Here is a 122-residue protein sequence, read N- to C-terminus: UPF0102 protein CE1920 (122 aa).

The protein belongs to the UPF0102 family.

In Corynebacterium efficiens (strain DSM 44549 / YS-314 / AJ 12310 / JCM 11189 / NBRC 100395), this protein is UPF0102 protein CE1920.